We begin with the raw amino-acid sequence, 1482 residues long: Chromosome partition protein MukB (1482 aa).

An ATP-binding site is contributed by 34 to 41 (GGNGAGKS). Residues 333-665 (ASDHLNLVQT…LEKQIERLSQ (333 aa)) adopt a coiled-coil conformation. The tract at residues 666–783 (PSGAEDSRMI…ELPLFGRAAR (118 aa)) is flexible hinge. Coiled-coil stretches lie at residues 784 to 1116 (ENRL…AKAG) and 1209 to 1260 (VDAI…MLNQ).

This sequence belongs to the SMC family. MukB subfamily. In terms of assembly, homodimerization via its hinge domain. Binds to DNA via its C-terminal region. Interacts, and probably forms a ternary complex, with MukE and MukF via its C-terminal region. The complex formation is stimulated by calcium or magnesium. Interacts with tubulin-related protein FtsZ.

The protein resides in the cytoplasm. It localises to the nucleoid. Its function is as follows. Plays a central role in chromosome condensation, segregation and cell cycle progression. Functions as a homodimer, which is essential for chromosome partition. Involved in negative DNA supercoiling in vivo, and by this means organize and compact chromosomes. May achieve or facilitate chromosome segregation by condensation DNA from both sides of a centrally located replisome during cell division. This chain is Chromosome partition protein MukB, found in Photorhabdus laumondii subsp. laumondii (strain DSM 15139 / CIP 105565 / TT01) (Photorhabdus luminescens subsp. laumondii).